Reading from the N-terminus, the 58-residue chain is Small ribosomal subunit protein bS21 (58 aa).

The protein belongs to the bacterial ribosomal protein bS21 family.

This is Small ribosomal subunit protein bS21 from Synechococcus sp. (strain CC9605).